The primary structure comprises 916 residues: Protein translocase subunit SecA (916 aa).

ATP is bound by residues glutamine 87, 105 to 109 (GEGKT), and aspartate 512. The disordered stretch occupies residues 857 to 916 (QHAEAPSMEQAVAGEEEELPEGPAPVVPLEPVRNEQKIGRNEPCPCGSGKKYKHCHGQLD). Residues cysteine 900, cysteine 902, cysteine 911, and histidine 912 each contribute to the Zn(2+) site. Residues 906 to 916 (KKYKHCHGQLD) show a composition bias toward basic residues.

It belongs to the SecA family. As to quaternary structure, monomer and homodimer. Part of the essential Sec protein translocation apparatus which comprises SecA, SecYEG and auxiliary proteins SecDF-YajC and YidC. Zn(2+) serves as cofactor.

The protein resides in the cell inner membrane. It localises to the cytoplasm. The catalysed reaction is ATP + H2O + cellular proteinSide 1 = ADP + phosphate + cellular proteinSide 2.. Part of the Sec protein translocase complex. Interacts with the SecYEG preprotein conducting channel. Has a central role in coupling the hydrolysis of ATP to the transfer of proteins into and across the cell membrane, serving both as a receptor for the preprotein-SecB complex and as an ATP-driven molecular motor driving the stepwise translocation of polypeptide chains across the membrane. The sequence is that of Protein translocase subunit SecA from Pseudomonas aeruginosa (strain UCBPP-PA14).